Consider the following 615-residue polypeptide: Proteasome-associated ATPase (615 aa).

Basic and acidic residues predominate over residues 1 to 13; it reads MSESQRHEAREDG. The interval 1–32 is disordered; sequence MSESQRHEAREDGFTTPHESGLSSEDAAELEE. A coiled-coil region spans residues 22-100; that stretch reads LSSEDAAELE…LREEVDRLGQ (79 aa). Position 302-307 (302-307) interacts with ATP; the sequence is GCGKTL. A docks into pockets in the proteasome alpha-ring region spans residues 614 to 615; the sequence is YL.

Belongs to the AAA ATPase family. Homohexamer. Assembles into a hexameric ring structure that caps the 20S proteasome core. Strongly interacts with the prokaryotic ubiquitin-like protein Pup through a hydrophobic interface; the interacting region of ARC lies in its N-terminal coiled-coil domain. There is one Pup binding site per ARC hexamer ring. Upon ATP-binding, the C-terminus of ARC interacts with the alpha-rings of the proteasome core, possibly by binding to the intersubunit pockets.

It participates in protein degradation; proteasomal Pup-dependent pathway. In terms of biological role, ATPase which is responsible for recognizing, binding, unfolding and translocation of pupylated proteins into the bacterial 20S proteasome core particle. May be essential for opening the gate of the 20S proteasome via an interaction with its C-terminus, thereby allowing substrate entry and access to the site of proteolysis. Thus, the C-termini of the proteasomal ATPase may function like a 'key in a lock' to induce gate opening and therefore regulate proteolysis. This Mycobacterium sp. (strain JLS) protein is Proteasome-associated ATPase.